We begin with the raw amino-acid sequence, 294 residues long: Nucleotide-binding protein Smlt1108 (294 aa).

Glycine 16 to serine 23 is an ATP binding site. Aspartate 69 to glycine 72 is a GTP binding site.

This sequence belongs to the RapZ-like family.

Its function is as follows. Displays ATPase and GTPase activities. The polypeptide is Nucleotide-binding protein Smlt1108 (Stenotrophomonas maltophilia (strain K279a)).